The following is a 561-amino-acid chain: BTB/POZ domain-containing protein At2g46260 (561 aa).

Disordered regions lie at residues M1–F31 and L100–D119. A compositionally biased stretch (polar residues) spans D17–E28. Residues D107–D119 are compositionally biased toward acidic residues. Positions I143–T212 constitute a BTB domain. A BACK domain is found at Q266 to V358.

The protein operates within protein modification; protein ubiquitination. In terms of biological role, may act as a substrate-specific adapter of an E3 ubiquitin-protein ligase complex (CUL3-RBX1-BTB) which mediates the ubiquitination and subsequent proteasomal degradation of target proteins. This chain is BTB/POZ domain-containing protein At2g46260, found in Arabidopsis thaliana (Mouse-ear cress).